Consider the following 357-residue polypeptide: 3-isopropylmalate dehydrogenase (357 aa).

Residues Arg97, Arg107, Arg135, and Asp224 each contribute to the substrate site. Residues Asp224, Asp248, and Asp252 each contribute to the Mg(2+) site. 282-294 (GSAPDIAGKNIAN) serves as a coordination point for NAD(+).

This sequence belongs to the isocitrate and isopropylmalate dehydrogenases family. LeuB type 1 subfamily. Homodimer. Mg(2+) serves as cofactor. It depends on Mn(2+) as a cofactor.

Its subcellular location is the cytoplasm. The enzyme catalyses (2R,3S)-3-isopropylmalate + NAD(+) = 4-methyl-2-oxopentanoate + CO2 + NADH. It functions in the pathway amino-acid biosynthesis; L-leucine biosynthesis; L-leucine from 3-methyl-2-oxobutanoate: step 3/4. Catalyzes the oxidation of 3-carboxy-2-hydroxy-4-methylpentanoate (3-isopropylmalate) to 3-carboxy-4-methyl-2-oxopentanoate. The product decarboxylates to 4-methyl-2 oxopentanoate. The polypeptide is 3-isopropylmalate dehydrogenase (Prochlorococcus marinus subsp. pastoris (strain CCMP1986 / NIES-2087 / MED4)).